The primary structure comprises 144 residues: NADH-ubiquinone oxidoreductase chain 6 (144 aa).

Transmembrane regions (helical) follow at residues 1-21, 25-45, 46-66, 75-95, and 108-128; these read MIKL…MNID, SSFF…MSMH, IWFS…ILVY, VVKS…FSPV, and FYYS…LFFM.

It belongs to the complex I subunit 6 family.

It is found in the mitochondrion membrane. It catalyses the reaction a ubiquinone + NADH + 5 H(+)(in) = a ubiquinol + NAD(+) + 4 H(+)(out). Functionally, core subunit of the mitochondrial membrane respiratory chain NADH dehydrogenase (Complex I) that is believed to belong to the minimal assembly required for catalysis. Complex I functions in the transfer of electrons from NADH to the respiratory chain. The immediate electron acceptor for the enzyme is believed to be ubiquinone. The chain is NADH-ubiquinone oxidoreductase chain 6 (nd6) from Caenorhabditis briggsae.